We begin with the raw amino-acid sequence, 335 residues long: MTHSSLPGYFGPLFAVFLFVLGLCVGSFLNVVIARVPLDQSIVRPRSRCPRCGHVLAWYENIPLLSWLALRARCRGCGVPISVRYPLVELLTGLLFFACLRRFGWTYELVPALVLVSLLVPLAFIDLDHWILPLSMTVPGMLAGIALAFPLGMDAFRDALMGAAVGFLSFRMMEYVGWKVFQREALGAGDKYLVAMLGAFLTWRALLGVLLFASMQGAVVGILMLLATGRAGPRTENTQDEPAGDAPPLTMTWEFTQPGLPLWKRLLLVPVCLLVQPIPDAPLDEEGEEEEWVPERTSIPFGPWLALAGLELLLLGPWLSRVLPADIAMMLGGLP.

The chain crosses the membrane as a helical span at residues 13 to 33 (LFAVFLFVLGLCVGSFLNVVI). 4 residues coordinate Zn(2+): Cys49, Cys52, Cys74, and Cys77. Helical transmembrane passes span 105 to 125 (WTYE…LAFI), 131 to 151 (ILPL…AFPL), 206 to 226 (LLGV…LMLL), 258 to 278 (PGLP…VQPI), and 299 to 319 (IPFG…GPWL).

The protein belongs to the peptidase A24 family. It depends on Zn(2+) as a cofactor.

The protein localises to the cell inner membrane. The catalysed reaction is Typically cleaves a -Gly-|-Phe- bond to release an N-terminal, basic peptide of 5-8 residues from type IV prepilin, and then N-methylates the new N-terminal amino group, the methyl donor being S-adenosyl-L-methionine.. In terms of biological role, plays an essential role in type IV pili and type II pseudopili formation by proteolytically removing the leader sequence from substrate proteins and subsequently monomethylating the alpha-amino group of the newly exposed N-terminal phenylalanine. This Myxococcus xanthus (strain DK1622) protein is Prepilin leader peptidase/N-methyltransferase (pilD).